The primary structure comprises 180 residues: Cell number regulator 7 (180 aa).

A helical membrane pass occupies residues 80 to 102 (AAAGAIYTLLACFTGFQCHWIYS).

The protein belongs to the cornifelin family. As to expression, expressed in roots, leaves, immature ears and silks. Detected preferentially in silks.

It localises to the membrane. In Zea mays (Maize), this protein is Cell number regulator 7 (CNR7).